A 238-amino-acid chain; its full sequence is Ubiquinone biosynthesis O-methyltransferase (238 aa).

The S-adenosyl-L-methionine site is built by Arg-38, Gly-57, Asp-78, and Leu-124.

This sequence belongs to the methyltransferase superfamily. UbiG/COQ3 family.

The catalysed reaction is a 3-demethylubiquinol + S-adenosyl-L-methionine = a ubiquinol + S-adenosyl-L-homocysteine + H(+). The enzyme catalyses a 3-(all-trans-polyprenyl)benzene-1,2-diol + S-adenosyl-L-methionine = a 2-methoxy-6-(all-trans-polyprenyl)phenol + S-adenosyl-L-homocysteine + H(+). Its pathway is cofactor biosynthesis; ubiquinone biosynthesis. Its function is as follows. O-methyltransferase that catalyzes the 2 O-methylation steps in the ubiquinone biosynthetic pathway. This chain is Ubiquinone biosynthesis O-methyltransferase, found in Marinobacter nauticus (strain ATCC 700491 / DSM 11845 / VT8) (Marinobacter aquaeolei).